The primary structure comprises 315 residues: Tyrosine recombinase XerC (315 aa).

Residues 1–103 (MITSFYAFLD…AIKSFARFCV (103 aa)) form the Core-binding (CB) domain. Positions 124–306 (ELPSPLTYEQ…SMKLKKQIHD (183 aa)) constitute a Tyr recombinase domain. Residues Arg164, Lys188, His258, Arg261, and His284 contribute to the active site. Tyr293 functions as the O-(3'-phospho-DNA)-tyrosine intermediate in the catalytic mechanism.

This sequence belongs to the 'phage' integrase family. XerC subfamily. Forms a cyclic heterotetrameric complex composed of two molecules of XerC and two molecules of XerD.

The protein localises to the cytoplasm. Its function is as follows. Site-specific tyrosine recombinase, which acts by catalyzing the cutting and rejoining of the recombining DNA molecules. The XerC-XerD complex is essential to convert dimers of the bacterial chromosome into monomers to permit their segregation at cell division. It also contributes to the segregational stability of plasmids. The protein is Tyrosine recombinase XerC of Chlamydia trachomatis serovar L2b (strain UCH-1/proctitis).